The following is an 862-amino-acid chain: Glucans biosynthesis glucosyltransferase H (862 aa).

The interval 1–25 (MELPATSGLNAQPGNAEGTTASTRP) is disordered. Positions 7–25 (SGLNAQPGNAEGTTASTRP) are enriched in polar residues. Transmembrane regions (helical) follow at residues 188 to 210 (RLTLLALMIAQTVAATWAMSSVL), 545 to 567 (GVMAYLSAPLWFLFLLLSTALLA), 597 to 619 (ALFSATATVLFLPKILSVLVLWA), 626 to 648 (GGAVHLALSMVIEAVFSVLAAPV), and 708 to 730 (FLWWLSPVVGALIVSILLSVFSS).

The protein belongs to the glycosyltransferase 2 family. OpgH subfamily.

It localises to the cell inner membrane. It functions in the pathway glycan metabolism; osmoregulated periplasmic glucan (OPG) biosynthesis. Its function is as follows. Involved in the biosynthesis of osmoregulated periplasmic glucans (OPGs). In Ralstonia nicotianae (strain ATCC BAA-1114 / GMI1000) (Ralstonia solanacearum), this protein is Glucans biosynthesis glucosyltransferase H.